The chain runs to 157 residues: SsrA-binding protein (157 aa).

The tract at residues 132 to 157 (KLHDKRETEKKRDWSREKGRLLRSRG) is disordered. Basic and acidic residues predominate over residues 135–151 (DKRETEKKRDWSREKGR).

This sequence belongs to the SmpB family.

It localises to the cytoplasm. Its function is as follows. Required for rescue of stalled ribosomes mediated by trans-translation. Binds to transfer-messenger RNA (tmRNA), required for stable association of tmRNA with ribosomes. tmRNA and SmpB together mimic tRNA shape, replacing the anticodon stem-loop with SmpB. tmRNA is encoded by the ssrA gene; the 2 termini fold to resemble tRNA(Ala) and it encodes a 'tag peptide', a short internal open reading frame. During trans-translation Ala-aminoacylated tmRNA acts like a tRNA, entering the A-site of stalled ribosomes, displacing the stalled mRNA. The ribosome then switches to translate the ORF on the tmRNA; the nascent peptide is terminated with the 'tag peptide' encoded by the tmRNA and targeted for degradation. The ribosome is freed to recommence translation, which seems to be the essential function of trans-translation. The protein is SsrA-binding protein of Rhodopseudomonas palustris (strain ATCC BAA-98 / CGA009).